The sequence spans 240 residues: Large ribosomal subunit protein uL1 (240 aa).

This sequence belongs to the universal ribosomal protein uL1 family. As to quaternary structure, part of the 50S ribosomal subunit.

In terms of biological role, binds directly to 23S rRNA. The L1 stalk is quite mobile in the ribosome, and is involved in E site tRNA release. Protein L1 is also a translational repressor protein, it controls the translation of the L11 operon by binding to its mRNA. In Nocardioides sp. (strain ATCC BAA-499 / JS614), this protein is Large ribosomal subunit protein uL1.